Consider the following 348-residue polypeptide: 3-isopropylmalate dehydrogenase (348 aa).

76 to 87 (GPKWTDPNNRPE) is an NAD(+) binding site. Substrate contacts are provided by R94, R104, R132, and D217. Residues D217, D241, and D245 each contribute to the Mg(2+) site. 275 to 287 (GSAPDIAGKNVAN) contributes to the NAD(+) binding site.

This sequence belongs to the isocitrate and isopropylmalate dehydrogenases family. LeuB type 1 subfamily. As to quaternary structure, homodimer. Mg(2+) serves as cofactor. Mn(2+) is required as a cofactor.

It is found in the cytoplasm. The enzyme catalyses (2R,3S)-3-isopropylmalate + NAD(+) = 4-methyl-2-oxopentanoate + CO2 + NADH. It participates in amino-acid biosynthesis; L-leucine biosynthesis; L-leucine from 3-methyl-2-oxobutanoate: step 3/4. Its function is as follows. Catalyzes the oxidation of 3-carboxy-2-hydroxy-4-methylpentanoate (3-isopropylmalate) to 3-carboxy-4-methyl-2-oxopentanoate. The product decarboxylates to 4-methyl-2 oxopentanoate. This chain is 3-isopropylmalate dehydrogenase, found in Staphylococcus aureus (strain COL).